Reading from the N-terminus, the 475-residue chain is MMERIRKEMILMERGLHSPTAGKRFSSLSDSAGGAVLEALENSQHPARLSPRLPSAPLHGALGDLPAKGKFEIDTLFNLQHPSSESTVSSEIASATESRKKPSHYSEAAAEADMSSDVEVGCSALRSPSGLGAAPLKENNAKGYTESGSVAGTTTSASGSGLGSLHGGGGGGNSGAAALGGSGSGSGADQVRRYRTAFTREQIARLEKEFYRENYVSRPRRCELAAALNLPETTIKVWFQNRRMKDKRQRLAMSWPHPADPSFYTYMMTHAAATGSLPYPFHSHVPLHYYPHVGVTAAAAAAAASGAAAAASSPFATSIRPLDTFRALSHPYSRPELLCSFRHPGLYQAPAAAAGLNSAASAAAAAAAAAAAASSAAAAGAPPSGSSAPCSCLSCHSSQSAAAAAAAAAAALGSRGGGGSGGGGGGGAGTAGGSDFGCSAAAPRSESGFLPYSAAVLSKTAVSPPDQRDEAPLTR.

2 disordered regions span residues 82 to 113 (PSSE…AEAD) and 155 to 189 (TSAS…SGAD). Residues 83 to 96 (SSESTVSSEIASAT) show a composition bias toward low complexity. The segment covering 160-186 (SGLGSLHGGGGGGNSGAAALGGSGSGS) has biased composition (gly residues). A DNA-binding region (homeobox) is located at residues 191-250 (VRRYRTAFTREQIARLEKEFYRENYVSRPRRCELAAALNLPETTIKVWFQNRRMKDKRQR).

Belongs to the even-skipped homeobox family.

It is found in the nucleus. This chain is Homeobox even-skipped homolog protein 2 (Evx2), found in Mus musculus (Mouse).